The chain runs to 227 residues: Cytochrome c oxidase subunit 2 (227 aa).

The Mitochondrial intermembrane segment spans residues Met-1–Ser-14. A helical transmembrane segment spans residues Pro-15–Thr-45. Over Leu-46–Gln-59 the chain is Mitochondrial matrix. A helical membrane pass occupies residues Glu-60–Thr-87. Residues Asp-88–Leu-227 are Mitochondrial intermembrane-facing. Residues His-161, Cys-196, Glu-198, Cys-200, His-204, and Met-207 each coordinate Cu cation. Glu-198 provides a ligand contact to Mg(2+).

The protein belongs to the cytochrome c oxidase subunit 2 family. As to quaternary structure, component of the cytochrome c oxidase (complex IV, CIV), a multisubunit enzyme composed of 14 subunits. The complex is composed of a catalytic core of 3 subunits MT-CO1, MT-CO2 and MT-CO3, encoded in the mitochondrial DNA, and 11 supernumerary subunits COX4I, COX5A, COX5B, COX6A, COX6B, COX6C, COX7A, COX7B, COX7C, COX8 and NDUFA4, which are encoded in the nuclear genome. The complex exists as a monomer or a dimer and forms supercomplexes (SCs) in the inner mitochondrial membrane with NADH-ubiquinone oxidoreductase (complex I, CI) and ubiquinol-cytochrome c oxidoreductase (cytochrome b-c1 complex, complex III, CIII), resulting in different assemblies (supercomplex SCI(1)III(2)IV(1) and megacomplex MCI(2)III(2)IV(2)). Found in a complex with TMEM177, COA6, COX18, COX20, SCO1 and SCO2. Interacts with TMEM177 in a COX20-dependent manner. Interacts with COX20. Interacts with COX16. It depends on Cu cation as a cofactor.

Its subcellular location is the mitochondrion inner membrane. It catalyses the reaction 4 Fe(II)-[cytochrome c] + O2 + 8 H(+)(in) = 4 Fe(III)-[cytochrome c] + 2 H2O + 4 H(+)(out). In terms of biological role, component of the cytochrome c oxidase, the last enzyme in the mitochondrial electron transport chain which drives oxidative phosphorylation. The respiratory chain contains 3 multisubunit complexes succinate dehydrogenase (complex II, CII), ubiquinol-cytochrome c oxidoreductase (cytochrome b-c1 complex, complex III, CIII) and cytochrome c oxidase (complex IV, CIV), that cooperate to transfer electrons derived from NADH and succinate to molecular oxygen, creating an electrochemical gradient over the inner membrane that drives transmembrane transport and the ATP synthase. Cytochrome c oxidase is the component of the respiratory chain that catalyzes the reduction of oxygen to water. Electrons originating from reduced cytochrome c in the intermembrane space (IMS) are transferred via the dinuclear copper A center (CU(A)) of subunit 2 and heme A of subunit 1 to the active site in subunit 1, a binuclear center (BNC) formed by heme A3 and copper B (CU(B)). The BNC reduces molecular oxygen to 2 water molecules using 4 electrons from cytochrome c in the IMS and 4 protons from the mitochondrial matrix. In Gorilla gorilla beringei (Mountain gorilla), this protein is Cytochrome c oxidase subunit 2 (MT-CO2).